We begin with the raw amino-acid sequence, 687 residues long: Transcription activator of gluconeogenesis SNOG_12336 (687 aa).

The disordered stretch occupies residues M1–R56. Polar residues predominate over residues G32–A45. The zn(2)-C6 fungal-type DNA-binding region spans C63–C91. 2 stretches are compositionally biased toward polar residues: residues P150–S159 and H169–P179. Disordered regions lie at residues P150–F214, E300–R411, and G536–A561. Residues P195–P212 show a composition bias toward low complexity. A compositionally biased stretch (polar residues) spans E300–T318. The segment covering P342–A357 has biased composition (low complexity). Polar residues-rich tracts occupy residues N362 to T384, R392 to H402, and M546 to A561. The 72-residue stretch at N482–T553 folds into the PAS domain.

It belongs to the ERT1/acuK family.

The protein localises to the nucleus. Functionally, transcription factor which regulates nonfermentable carbon utilization. Activator of gluconeogenetic genes. The sequence is that of Transcription activator of gluconeogenesis SNOG_12336 from Phaeosphaeria nodorum (strain SN15 / ATCC MYA-4574 / FGSC 10173) (Glume blotch fungus).